The primary structure comprises 540 residues: Coiled-coil domain-containing protein 116 (540 aa).

The stretch at 79–102 forms a coiled coil; sequence QVLDSLQTVVEQATECVATMKTEA. Positions 347 to 400 are disordered; that stretch reads PGNSDLQPSSKASLPTDREARGETCYSPTSASSPKTSHRKSKDRRGSPSNAVQM. Composition is skewed to polar residues over residues 350 to 359 and 372 to 381; these read SDLQPSSKAS and YSPTSASSPK. At serine 393 the chain carries Phosphoserine.

The protein resides in the cytoplasm. It is found in the cytoskeleton. Its subcellular location is the microtubule organizing center. It localises to the centrosome. This is Coiled-coil domain-containing protein 116 (Ccdc116) from Rattus norvegicus (Rat).